A 158-amino-acid chain; its full sequence is Large ribosomal subunit protein eL24 (158 aa).

Positions 98-146 are enriched in basic and acidic residues; sequence LDASHKKAEAEKAVRELKQKKANDIEKKRADRKLQGKDVKAAKKAETKK. The interval 98–158 is disordered; the sequence is LDASHKKAEA…QPVGAKGGKK (61 aa).

The protein belongs to the eukaryotic ribosomal protein eL24 family.

The chain is Large ribosomal subunit protein eL24 (RPL24) from Tetrahymena thermophila (strain SB210).